A 155-amino-acid polypeptide reads, in one-letter code: Small ribosomal subunit protein uS9 (155 aa).

Belongs to the universal ribosomal protein uS9 family.

The sequence is that of Small ribosomal subunit protein uS9 from Rhizobium johnstonii (strain DSM 114642 / LMG 32736 / 3841) (Rhizobium leguminosarum bv. viciae).